Here is a 105-residue protein sequence, read N- to C-terminus: Urease subunit beta (105 aa).

Belongs to the urease beta subunit family. As to quaternary structure, heterotrimer of UreA (gamma), UreB (beta) and UreC (alpha) subunits. Three heterotrimers associate to form the active enzyme.

It localises to the cytoplasm. The enzyme catalyses urea + 2 H2O + H(+) = hydrogencarbonate + 2 NH4(+). The protein operates within nitrogen metabolism; urea degradation; CO(2) and NH(3) from urea (urease route): step 1/1. This chain is Urease subunit beta, found in Mycobacterium sp. (strain JLS).